Reading from the N-terminus, the 223-residue chain is DNA mismatch repair protein MutH (223 aa).

The protein belongs to the MutH family.

The protein localises to the cytoplasm. Functionally, sequence-specific endonuclease that cleaves unmethylated GATC sequences. It is involved in DNA mismatch repair. The protein is DNA mismatch repair protein MutH of Shewanella baltica (strain OS223).